A 603-amino-acid chain; its full sequence is Laccase 1 (603 aa).

Positions 1-20 (MSRFARLLLIVALFFTNAWA) are cleaved as a signal peptide. Plastocyanin-like domains follow at residues 66–108 (QRPI…IHIR) and 159–349 (LVVS…MRIP). Cu cation is bound by residues His-90 and His-92. Asn-246, Asn-269, Asn-434, and Asn-474 each carry an N-linked (GlcNAc...) asparagine glycan. Residues 460 to 588 (TRDTENDGLV…GGMGIAILDG (129 aa)) enclose the Plastocyanin-like 3 domain. His-496, His-499, and His-501 together coordinate Cu cation. Asn-516 is a glycosylation site (N-linked (GlcNAc...) asparagine). Cu cation contacts are provided by His-570, Cys-571, His-572, and His-576.

Belongs to the multicopper oxidase family. It depends on Cu cation as a cofactor.

It is found in the cell surface. It functions in the pathway pigment biosynthesis. In terms of biological role, laccase; part of the Pks1 gene cluster that mediates the biosynthesis of an anthraquinone derivative pigment that contributes to conidial pigmentation that provides protection from UV radiation, heat and cold stress. The polyketide synthase Pks1 produces 1-acetyl-2,4,6,8-tetrahydroxy-9,10-anthraquinone though condensation of acetyl-CoA with malonyl-CoA. The dehydratase EthD and the laccase Mlac1 further convert the anthraquinone derivative into the final conidial pigment. The protein is Laccase 1 of Metarhizium anisopliae (Entomophthora anisopliae).